We begin with the raw amino-acid sequence, 67 residues long: Protein SlyX homolog (67 aa).

Belongs to the SlyX family.

The sequence is that of Protein SlyX homolog from Mesorhizobium japonicum (strain LMG 29417 / CECT 9101 / MAFF 303099) (Mesorhizobium loti (strain MAFF 303099)).